The primary structure comprises 238 residues: Heme oxygenase 1 (238 aa).

This sequence belongs to the heme oxygenase family.

The catalysed reaction is heme b + 3 reduced [NADPH--hemoprotein reductase] + 3 O2 = biliverdin IXalpha + CO + Fe(2+) + 3 oxidized [NADPH--hemoprotein reductase] + 3 H2O + H(+). Functionally, catalyzes the opening of the heme ring with the release of iron. Key enzyme in the synthesis of the chromophoric part of the photosynthetic antennae. Upon overexpression in E.coli with PCB:ferredoxin oxidoreductase, CpeS and either CpcB or PecB permits synthesis of phycocyanin-coupled CpcB or PecB. The protein is Heme oxygenase 1 (pbsA1) of Nostoc sp. (strain PCC 7120 / SAG 25.82 / UTEX 2576).